A 98-amino-acid polypeptide reads, in one-letter code: Ig heavy chain V region 6.96 (98 aa).

In terms of domain architecture, Ig-like spans 1-98 (EVQLVESGGG…EDTAMYYCAR (98 aa)).

The chain is Ig heavy chain V region 6.96 from Mus musculus (Mouse).